Here is a 365-residue protein sequence, read N- to C-terminus: Caffeic acid 3-O-methyltransferase 1 (365 aa).

130–136 (MNQDKVL) provides a ligand contact to substrate. The tract at residues 162-180 (AFEYHGTDPRFNKVFNKGM) is substrate binding. S-adenosyl-L-methionine is bound by residues glycine 208, aspartate 231, aspartate 251, methionine 252, and lysine 265. Histidine 269 functions as the Proton acceptor in the catalytic mechanism.

It belongs to the class I-like SAM-binding methyltransferase superfamily. Cation-independent O-methyltransferase family. COMT subfamily. As to quaternary structure, homodimer. The N-terminus is blocked. As to expression, xylem.

The catalysed reaction is (E)-caffeate + S-adenosyl-L-methionine = (E)-ferulate + S-adenosyl-L-homocysteine + H(+). The protein operates within aromatic compound metabolism; phenylpropanoid biosynthesis. Its function is as follows. Catalyzes the conversion of caffeic acid to ferulic acid and of 5-hydroxyferulic acid to sinapic acid. The resulting products may subsequently be converted to the corresponding alcohols that are incorporated into lignins. This chain is Caffeic acid 3-O-methyltransferase 1 (OMT1), found in Populus tremuloides (Quaking aspen).